The primary structure comprises 157 residues: Crossover junction endodeoxyribonuclease RuvC (157 aa).

Active-site residues include Asp7, Glu66, and Asp139. 3 residues coordinate Mg(2+): Asp7, Glu66, and Asp139.

It belongs to the RuvC family. As to quaternary structure, homodimer which binds Holliday junction (HJ) DNA. The HJ becomes 2-fold symmetrical on binding to RuvC with unstacked arms; it has a different conformation from HJ DNA in complex with RuvA. In the full resolvosome a probable DNA-RuvA(4)-RuvB(12)-RuvC(2) complex forms which resolves the HJ. Mg(2+) serves as cofactor.

The protein resides in the cytoplasm. It catalyses the reaction Endonucleolytic cleavage at a junction such as a reciprocal single-stranded crossover between two homologous DNA duplexes (Holliday junction).. The RuvA-RuvB-RuvC complex processes Holliday junction (HJ) DNA during genetic recombination and DNA repair. Endonuclease that resolves HJ intermediates. Cleaves cruciform DNA by making single-stranded nicks across the HJ at symmetrical positions within the homologous arms, yielding a 5'-phosphate and a 3'-hydroxyl group; requires a central core of homology in the junction. The consensus cleavage sequence is 5'-(A/T)TT(C/G)-3'. Cleavage occurs on the 3'-side of the TT dinucleotide at the point of strand exchange. HJ branch migration catalyzed by RuvA-RuvB allows RuvC to scan DNA until it finds its consensus sequence, where it cleaves and resolves the cruciform DNA. In terms of biological role, required for efficient infection in a mouse model system. In Helicobacter pylori (strain G27), this protein is Crossover junction endodeoxyribonuclease RuvC.